Reading from the N-terminus, the 135-residue chain is Sex-regulated protein janus-A (135 aa).

Lysine 37 lines the substrate pocket. The active-site Proton acceptor is histidine 63. Serine 104–glycine 106 contacts substrate.

This sequence belongs to the janus family.

Functionally, janA and janB regulate somatic sex differentiation. This chain is Sex-regulated protein janus-A (janA), found in Drosophila erecta (Fruit fly).